Here is a 146-residue protein sequence, read N- to C-terminus: Protein LDOC1 (146 aa).

It belongs to the LDOC1 family. As to quaternary structure, interacts with NOD2. In terms of tissue distribution, ubiquitously expressed with high levels in brain ant thyroid and low expression in placenta, liver and leukocytes. Expressed as well in six of the seven human breast cancer cell lines examined.

It is found in the nucleus. Functionally, may have an important role in the development and/or progression of some cancers. This Homo sapiens (Human) protein is Protein LDOC1 (LDOC1).